The primary structure comprises 277 residues: General transcription factor IIF subunit 2 (277 aa).

This sequence belongs to the TFIIF beta subunit family. In terms of assembly, heterodimer of an alpha and a beta subunit.

It is found in the nucleus. TFIIF is a general transcription initiation factor that binds to RNA polymerase II and helps to recruit it to the initiation complex in collaboration with TFIIB. This is General transcription factor IIF subunit 2 (TfIIFbeta) from Drosophila melanogaster (Fruit fly).